Consider the following 285-residue polypeptide: Aquaporin-6 (285 aa).

The next 3 membrane-spanning stretches (helical) occupy residues 36 to 56 (IFWK…VFSC), 76 to 96 (YCFK…ALLL), and 105 to 125 (ISLV…CYYG). The short motif at 86–88 (NPV) is the NPA 1 element. The N-linked (GlcNAc...) asparagine glycan is linked to N128. Helical transmembrane passes span 143-163 (VSPA…ILTM) and 177-197 (GDSN…SGMA). Positions 206 to 208 (NPM) match the NPA 2 motif. Residues 225–245 (YIYWIGPIFGCLLAVFTFDYT) form a helical membrane-spanning segment.

Belongs to the MIP/aquaporin (TC 1.A.8) family.

It is found in the cell membrane. Functionally, probable water-specific aquaporin that may modulate the water content and osmolytes during anhydrobiosis. This chain is Aquaporin-6, found in Milnesium tardigradum (Water bear).